Here is a 329-residue protein sequence, read N- to C-terminus: Sideroflexin (329 aa).

5 consecutive transmembrane segments (helical) span residues 95-115, 147-167, 183-203, 238-258, and 274-294; these read AFLP…ASIG, ILEA…GLGW, LRMM…VLIM, FSRA…MGLF, and LNLA…IALF.

This sequence belongs to the sideroflexin family.

It localises to the mitochondrion membrane. Functionally, mitochondrial amino-acid transporter that mediates transport of serine into mitochondria. This is Sideroflexin from Dictyostelium discoideum (Social amoeba).